Consider the following 87-residue polypeptide: Small ribosomal subunit protein bS20 (87 aa).

It belongs to the bacterial ribosomal protein bS20 family.

Functionally, binds directly to 16S ribosomal RNA. In Nitrosomonas europaea (strain ATCC 19718 / CIP 103999 / KCTC 2705 / NBRC 14298), this protein is Small ribosomal subunit protein bS20.